The chain runs to 295 residues: 33 kDa chaperonin (295 aa).

Intrachain disulfides connect Cys236/Cys238 and Cys269/Cys272.

It belongs to the HSP33 family. In terms of processing, under oxidizing conditions two disulfide bonds are formed involving the reactive cysteines. Under reducing conditions zinc is bound to the reactive cysteines and the protein is inactive.

The protein resides in the cytoplasm. Its function is as follows. Redox regulated molecular chaperone. Protects both thermally unfolding and oxidatively damaged proteins from irreversible aggregation. Plays an important role in the bacterial defense system toward oxidative stress. This chain is 33 kDa chaperonin, found in Citrifermentans bemidjiense (strain ATCC BAA-1014 / DSM 16622 / JCM 12645 / Bem) (Geobacter bemidjiensis).